We begin with the raw amino-acid sequence, 77 residues long: U8-hexatoxin-Mg1a (77 aa).

The signal sequence occupies residues 1-22; that stretch reads MKVFSFTIGLVVIISLFAFALA. Positions 23–43 are excised as a propeptide; it reads YDEETDLMKKLVEMERAIEQR. Intrachain disulfides connect Cys-46–Cys-60, Cys-53–Cys-65, and Cys-59–Cys-76.

Expressed by the venom gland.

It is found in the secreted. Functionally, intrathorax injection into crickets causes paralysis prolonged for more than 60 minutes, followed by recovery. This is U8-hexatoxin-Mg1a from Macrothele gigas (Japanese funnel web spider).